We begin with the raw amino-acid sequence, 263 residues long: Inactive adenylate kinase (263 aa).

It belongs to the adenylate kinase family.

The protein localises to the cytoplasm. Functionally, lacks adenylate kinase activity. This chain is Inactive adenylate kinase, found in Plasmodium falciparum (isolate 3D7).